The chain runs to 223 residues: Ethylene-inducing xylanase 1 (223 aa).

The first 19 residues, 1 to 19 (MVSFTSLLAAFSVVSGVLT), serve as a signal peptide directing secretion. In terms of domain architecture, GH11 spans 34 to 223 (KRTPSSTGTS…SSGSATMTVS (190 aa)). The active-site Nucleophile is Glu-119. The interval 174–184 (RRTKRTSGSVN) is nuclear localization signal. Catalysis depends on Glu-210, which acts as the Proton donor.

This sequence belongs to the glycosyl hydrolase 11 (cellulase G) family.

Its subcellular location is the secreted. It is found in the host nucleus. It catalyses the reaction Endohydrolysis of (1-&gt;4)-beta-D-xylosidic linkages in xylans.. It functions in the pathway glycan degradation; xylan degradation. In terms of biological role, endo-1,4-beta-xylanase involved in the hydrolysis of xylan, a major structural heterogeneous polysaccharide found in plant biomass representing the second most abundant polysaccharide in the biosphere, after cellulose. Acts as an effector that localizes to the host nucleus to contribute to the virulence process. Induces host innate immunity responses; triggers BAK1-and SOBIR1-dependent cell death, salicylic acid signaling and jasmonic acid signaling. Does not exhibit any cell death when transiently expressed in N.benthamiana. This chain is Ethylene-inducing xylanase 1, found in Verticillium dahliae (strain VdLs.17 / ATCC MYA-4575 / FGSC 10137) (Verticillium wilt).